The chain runs to 356 residues: Phosphotriesterase-related protein (356 aa).

Residues H23, H25, E175, H207, H236, and D304 each contribute to the a divalent metal cation site.

The protein belongs to the metallo-dependent hydrolases superfamily. Phosphotriesterase family. It depends on a divalent metal cation as a cofactor.

In Aedes aegypti (Yellowfever mosquito), this protein is Phosphotriesterase-related protein.